The following is an 86-amino-acid chain: Small ribosomal subunit protein bS20 (86 aa).

Over residues methionine 1–methionine 27 the composition is skewed to basic residues. Residues methionine 1–methionine 28 form a disordered region.

Belongs to the bacterial ribosomal protein bS20 family.

Functionally, binds directly to 16S ribosomal RNA. The chain is Small ribosomal subunit protein bS20 from Vibrio parahaemolyticus serotype O3:K6 (strain RIMD 2210633).